The chain runs to 273 residues: 4-hydroxy-tetrahydrodipicolinate reductase (273 aa).

NAD(+) is bound by residues glycine 12–methionine 17 and glutamate 38. Arginine 39 lines the NADP(+) pocket. Residues glycine 102 to threonine 104 and alanine 126 to phenylalanine 129 contribute to the NAD(+) site. Histidine 159 serves as the catalytic Proton donor/acceptor. Residue histidine 160 participates in (S)-2,3,4,5-tetrahydrodipicolinate binding. Lysine 163 (proton donor) is an active-site residue. Residue glycine 169 to threonine 170 participates in (S)-2,3,4,5-tetrahydrodipicolinate binding.

Belongs to the DapB family. As to quaternary structure, homotetramer.

Its subcellular location is the cytoplasm. The catalysed reaction is (S)-2,3,4,5-tetrahydrodipicolinate + NAD(+) + H2O = (2S,4S)-4-hydroxy-2,3,4,5-tetrahydrodipicolinate + NADH + H(+). It catalyses the reaction (S)-2,3,4,5-tetrahydrodipicolinate + NADP(+) + H2O = (2S,4S)-4-hydroxy-2,3,4,5-tetrahydrodipicolinate + NADPH + H(+). It functions in the pathway amino-acid biosynthesis; L-lysine biosynthesis via DAP pathway; (S)-tetrahydrodipicolinate from L-aspartate: step 4/4. Functionally, catalyzes the conversion of 4-hydroxy-tetrahydrodipicolinate (HTPA) to tetrahydrodipicolinate. This is 4-hydroxy-tetrahydrodipicolinate reductase from Salmonella dublin (strain CT_02021853).